Reading from the N-terminus, the 338-residue chain is Phenylalanine--tRNA ligase alpha subunit (338 aa).

Glu-252 serves as a coordination point for Mg(2+).

The protein belongs to the class-II aminoacyl-tRNA synthetase family. Phe-tRNA synthetase alpha subunit type 1 subfamily. Tetramer of two alpha and two beta subunits. Mg(2+) serves as cofactor.

The protein resides in the cytoplasm. It catalyses the reaction tRNA(Phe) + L-phenylalanine + ATP = L-phenylalanyl-tRNA(Phe) + AMP + diphosphate + H(+). This chain is Phenylalanine--tRNA ligase alpha subunit, found in Pseudomonas fluorescens (strain Pf0-1).